We begin with the raw amino-acid sequence, 2123 residues long: Bromodomain adjacent to zinc finger domain protein 2B (2123 aa).

7 disordered regions span residues Met1–Thr129, Thr144–Gln306, Pro357–Lys402, Asn473–Pro534, Arg546–Ala691, Arg756–Glu793, and Ala937–Glu960. The span at Leu7–Ser46 shows a compositional bias: low complexity. Over residues Phe83–Ala95 the composition is skewed to pro residues. A compositionally biased stretch (polar residues) spans Asn100 to Asn116. Low complexity-rich tracts occupy residues Ser147–Ser157 and Glu193–Ser216. A compositionally biased stretch (acidic residues) spans Asp217 to Thr243. The span at Ser259–Thr277 shows a compositional bias: basic and acidic residues. 2 stretches are compositionally biased toward low complexity: residues Pro291 to Gln306 and Asn366 to Glu379. The segment covering Asn473 to Ala502 has biased composition (polar residues). A compositionally biased stretch (basic and acidic residues) spans Arg546–Glu559. Acidic residues predominate over residues Asp560 to Ser587. The segment covering Glu588–Ser597 has biased composition (low complexity). A compositionally biased stretch (acidic residues) spans Glu598–Thr615. 2 stretches are compositionally biased toward low complexity: residues Ser628 to Ser637 and Thr671 to Gly683. An MBD domain is found at Val690–Pro765. Residues Arg756–Arg778 show a composition bias toward basic and acidic residues. A DDT domain is found at Gly1004–Leu1069. Disordered regions lie at residues Arg1183–Ser1260, Pro1396–Ala1444, Thr1499–Gln1526, and Phe1588–Val1614. Over residues Ser1214–Lys1238 the composition is skewed to acidic residues. A compositionally biased stretch (basic and acidic residues) spans Asp1239 to Ile1248. A coiled-coil region spans residues Glu1254–Lys1281. Composition is skewed to polar residues over residues Asn1408 to Gly1422 and Pro1430 to Ala1444. A compositionally biased stretch (pro residues) spans Ser1505–Ala1515. Over residues Phe1588–Ser1600 the composition is skewed to low complexity. Residues Lys1886 to Lys1936 form a PHD-type zinc finger. Residues Val1949–Pro2013 are disordered. Residues Gly1984–Glu1995 are compositionally biased toward basic and acidic residues. Positions Thr1996–Ile2010 are enriched in polar residues. Residues Lys2015–Thr2119 form the Bromo domain.

This sequence belongs to the WAL family. Component of the BRF-1 ISWI chromatin remodeling complex, at least composed of SMARCA1 and BAZ2B, which regulates the spacing of histone octamers on the DNA template to facilitate access to DNA. Within the BRF-1 ISWI chromatin remodeling complex interacts with SMARCA1; the interaction is direct. Component of the BRF-5 ISWI chromatin remodeling complex, at least composed of SMARCA5/SNF2H and BAZ2B, which regulates the spacing of histone octamers on the DNA template to facilitate access to DNA. Within the BRF-5 ISWI chromatin remodeling complex interacts with SMARCA5/SNF2H; the interaction is direct. Interacts with acetylated lysine residues on histone H1.4, H2A, H2B, H3 and H4 (in vitro). Interacts with EHMT1.

It localises to the nucleus. Functionally, regulatory subunit of the ATP-dependent BRF-1 and BRF-5 ISWI chromatin remodeling complexes, which form ordered nucleosome arrays on chromatin and facilitate access to DNA during DNA-templated processes such as DNA replication, transcription, and repair. Both complexes regulate the spacing of nucleosomes along the chromatin and have the ability to slide mononucleosomes to the center of a DNA template. The BRF-1 ISWI chromatin remodeling complex has a lower ATP hydrolysis rate than the BRF-5 ISWI chromatin remodeling complex. Chromatin reader protein, involved in positively modulating the rate of age-related behavioral deterioration. Represses the expression of mitochondrial function-related genes, perhaps by occupying their promoter regions, working in concert with histone methyltransferase EHMT1. This is Bromodomain adjacent to zinc finger domain protein 2B from Mus musculus (Mouse).